The following is a 116-amino-acid chain: Vesicle-associated membrane protein 5 (116 aa).

Residues methionine 1–cysteine 72 lie on the Cytoplasmic side of the membrane. The v-SNARE coiled-coil homology domain maps to glutamate 5 to glutamate 65. 3 positions are modified to phosphoserine: serine 41, serine 48, and serine 49. A helical; Anchor for type IV membrane protein transmembrane segment spans residues valine 73–leucine 93. Over proline 94–asparagine 116 the chain is Vesicular. The disordered stretch occupies residues serine 96–asparagine 116.

It belongs to the synaptobrevin family. (Microbial infection) Targeted and hydrolyzed by C.botulinum neurotoxin type X (BoNT/X) which hydrolyzes the 40-Arg-|-Ser-41 bond and probably inhibits neurotransmitter release. It remains unknown whether BoNT/X is ever produced, or what organisms it targets.

It is found in the cell membrane. The protein resides in the endomembrane system. Its subcellular location is the golgi apparatus. The protein localises to the trans-Golgi network membrane. In terms of biological role, may participate in trafficking events that are associated with myogenesis, such as myoblast fusion and/or GLUT4 trafficking. This chain is Vesicle-associated membrane protein 5 (VAMP5), found in Homo sapiens (Human).